A 522-amino-acid chain; its full sequence is Glucans biosynthesis protein G (522 aa).

Residues 1 to 33 (MPNNKFFVKSSKASLRWLGATVLLTLYALPSWA) form the signal peptide.

Belongs to the OpgD/OpgG family.

It is found in the periplasm. Its pathway is glycan metabolism; osmoregulated periplasmic glucan (OPG) biosynthesis. Involved in the biosynthesis of osmoregulated periplasmic glucans (OPGs). This is Glucans biosynthesis protein G from Sodalis glossinidius (strain morsitans).